The primary structure comprises 447 residues: Na(+)-translocating NADH-quinone reductase subunit A (447 aa).

It belongs to the NqrA family. As to quaternary structure, composed of six subunits; NqrA, NqrB, NqrC, NqrD, NqrE and NqrF.

The catalysed reaction is a ubiquinone + n Na(+)(in) + NADH + H(+) = a ubiquinol + n Na(+)(out) + NAD(+). Functionally, NQR complex catalyzes the reduction of ubiquinone-1 to ubiquinol by two successive reactions, coupled with the transport of Na(+) ions from the cytoplasm to the periplasm. NqrA to NqrE are probably involved in the second step, the conversion of ubisemiquinone to ubiquinol. In Neisseria gonorrhoeae (strain ATCC 700825 / FA 1090), this protein is Na(+)-translocating NADH-quinone reductase subunit A.